The following is an 80-amino-acid chain: MKYPLVPLVSDLTLSFLVFWLCLPVALLLFLTIVWLHFLLSQESKEDDSDLCFNWEPWSKRPSECGCEETFPGEEDGLHW.

A helical transmembrane segment spans residues 16–36; the sequence is FLVFWLCLPVALLLFLTIVWL. Serine 63 carries the phosphoserine modification.

This sequence belongs to the adipogenin family. In terms of tissue distribution, selectively expressed in adipose tissue where it is particularly enriched in brown adipose tissue. In adipose tissue, expressed exclusively in adipocytes and not in the stromal-vascular cell population. Expressed at much lower levels in heart, stomach and muscle and barely detected in kidney and lung.

The protein resides in the membrane. The protein localises to the nucleus. In terms of biological role, plays a role in stimulating adipocyte differentiation and development. The protein is Adipogenin (Adig) of Mus musculus (Mouse).